We begin with the raw amino-acid sequence, 150 residues long: uncharacterized protein (150 aa).

This sequence belongs to the aspartate/glutamate racemases family.

This is an uncharacterized protein from Pectobacterium carotovorum subsp. carotovorum (Erwinia carotovora subsp. carotovora).